The primary structure comprises 310 residues: Cytosolic Fe-S cluster assembly factor Nubp1 homolog (310 aa).

4 residues coordinate [4Fe-4S] cluster: Cys9, Cys23, Cys26, and Cys32. ATP is bound at residue 63-70 (GKGGVGKS). [4Fe-4S] cluster-binding residues include Cys240 and Cys243.

The protein belongs to the Mrp/NBP35 ATP-binding proteins family. NUBP1/NBP35 subfamily. As to quaternary structure, heterotetramer of 2 Nubp1 and 2 Nubp2 chains. It depends on [4Fe-4S] cluster as a cofactor.

It localises to the cytoplasm. Functionally, component of the cytosolic iron-sulfur (Fe/S) protein assembly (CIA) machinery. Required for maturation of extramitochondrial Fe-S proteins. The Nubp1-Nubp2 heterotetramer forms a Fe-S scaffold complex, mediating the de novo assembly of an Fe-S cluster and its transfer to target apoproteins. This chain is Cytosolic Fe-S cluster assembly factor Nubp1 homolog, found in Drosophila virilis (Fruit fly).